The primary structure comprises 420 residues: Putative competence-damage inducible protein (420 aa).

This sequence belongs to the CinA family.

This Halalkalibacterium halodurans (strain ATCC BAA-125 / DSM 18197 / FERM 7344 / JCM 9153 / C-125) (Bacillus halodurans) protein is Putative competence-damage inducible protein.